A 620-amino-acid polypeptide reads, in one-letter code: 1-deoxy-D-xylulose-5-phosphate synthase (620 aa).

Thiamine diphosphate-binding positions include His75 and 116–118 (AHS). Asp147 is a binding site for Mg(2+). Thiamine diphosphate is bound by residues 148–149 (GA), Asn177, Tyr284, and Glu366. Asn177 serves as a coordination point for Mg(2+).

It belongs to the transketolase family. DXPS subfamily. In terms of assembly, homodimer. It depends on Mg(2+) as a cofactor. The cofactor is thiamine diphosphate.

The catalysed reaction is D-glyceraldehyde 3-phosphate + pyruvate + H(+) = 1-deoxy-D-xylulose 5-phosphate + CO2. Its pathway is metabolic intermediate biosynthesis; 1-deoxy-D-xylulose 5-phosphate biosynthesis; 1-deoxy-D-xylulose 5-phosphate from D-glyceraldehyde 3-phosphate and pyruvate: step 1/1. Its function is as follows. Catalyzes the acyloin condensation reaction between C atoms 2 and 3 of pyruvate and glyceraldehyde 3-phosphate to yield 1-deoxy-D-xylulose-5-phosphate (DXP). The sequence is that of 1-deoxy-D-xylulose-5-phosphate synthase from Bordetella bronchiseptica (strain ATCC BAA-588 / NCTC 13252 / RB50) (Alcaligenes bronchisepticus).